Here is a 41-residue protein sequence, read N- to C-terminus: Alpha-conotoxin CIB (41 aa).

Positions 1-21 are excised as a propeptide; that stretch reads SDGRNEAANDEASDVIELALK. 2 disulfides stabilise this stretch: cysteine 23–cysteine 29 and cysteine 24–cysteine 37. The interval 25 to 27 is ser-Xaa-Pro motif, crucial for potent interaction with nAChR; that stretch reads SNP. The residue at position 37 (cysteine 37) is a Cysteine amide.

It belongs to the conotoxin A superfamily. As to expression, expressed by the venom duct.

The protein resides in the secreted. Its function is as follows. Alpha-conotoxins act on postsynaptic membranes, they bind to the nicotinic acetylcholine receptors (nAChR) and thus inhibit them. This toxin blocks rat neuronal nAChR alpha-3-beta-2/CHRNA3-CHRNB2 (IC(50)=128.9 nM) and alpha-7/CHRNA7 (IC(50)=1511 nM). In vivo, intramuscular injection into zebrafish does not produce any effect on the locomotion of zebrafish. In Conus catus (Cat cone), this protein is Alpha-conotoxin CIB.